The sequence spans 234 residues: Carboxy-S-adenosyl-L-methionine synthase (234 aa).

S-adenosyl-L-methionine-binding positions include Y35, 60 to 62 (GCS), 83 to 84 (DN), 109 to 110 (DI), N124, and R191.

This sequence belongs to the class I-like SAM-binding methyltransferase superfamily. Cx-SAM synthase family. In terms of assembly, homodimer.

It carries out the reaction prephenate + S-adenosyl-L-methionine = carboxy-S-adenosyl-L-methionine + 3-phenylpyruvate + H2O. Its function is as follows. Catalyzes the conversion of S-adenosyl-L-methionine (SAM) to carboxy-S-adenosyl-L-methionine (Cx-SAM). The sequence is that of Carboxy-S-adenosyl-L-methionine synthase from Campylobacter concisus (strain 13826).